A 1053-amino-acid polypeptide reads, in one-letter code: Integrin alpha-3 (1053 aa).

The N-terminal stretch at 1-32 (MGPGPCRVPRAPGWLLRALALMVAACGRVAFA) is a signal peptide. At 33-993 (FNLDTRFLVV…LVEELPAEIE (961 aa)) the chain is on the extracellular side. 7 FG-GAP repeats span residues 38–103 (RFLV…KDDC), 110–171 (EKSD…DLQL), 185–235 (CNSN…WDLS), 236–293 (EYSY…GGDL), 294–355 (QRKQ…ASFP), 357–412 (QPSL…GLLR), and 416–478 (QIIH…VARP). An N-linked (GlcNAc...) asparagine glycan is attached at Asn86. 3 cysteine pairs are disulfide-bonded: Cys94/Cys103, Cys140/Cys162, and Cys185/Cys197. 2 disulfides stabilise this stretch: Cys486–Cys491 and Cys497–Cys551. Residues Asn501, Asn512, Asn574, and Asn606 are each glycosylated (N-linked (GlcNAc...) asparagine). Cys616 and Cys622 form a disulfide bridge. N-linked (GlcNAc...) asparagine glycosylation is found at Asn657, Asn699, Asn843, and Asn859. Cys695 and Cys704 form a disulfide bridge. Disulfide bonds link Cys848–Cys906 and Cys913–Cys918. The interval 865–890 (PGVTPLSPQRRRRQLDPGGDQSSPPV) is disordered. N-linked (GlcNAc...) asparagine glycosylation is found at Asn925, Asn928, Asn937, and Asn971. Residues 994–1021 (LWLVLVAVGAGLLLLGLIILLLWKCGFF) form a helical membrane-spanning segment. Residue Cys1018 is the site of S-palmitoyl cysteine attachment. The Cytoplasmic portion of the chain corresponds to 1022–1053 (KRARTRALYEAKRQKAEMKSQPSETERLTDDY).

Belongs to the integrin alpha chain family. In terms of assembly, heterodimer of an alpha and a beta subunit. The alpha subunit is composed of a heavy and a light chain linked by a disulfide bond. Alpha-3 associates with beta-1. Interacts with HPS5. Interacts with FAP (seprase); the interaction occurs at the cell surface of invadopodia membrane in a collagen-dependent manner. In terms of tissue distribution, isoform 1 and isoform 2 are expressed in heart and brain. Only isoform 1 is detected in lung.

The protein localises to the cell membrane. It is found in the cell projection. It localises to the invadopodium membrane. The protein resides in the filopodium membrane. In terms of biological role, integrin alpha-3/beta-1 is a receptor for fibronectin, laminin, collagen, epiligrin, thrombospondin and CSPG4. Integrin alpha-3/beta-1 provides a docking site for FAP (seprase) at invadopodia plasma membranes in a collagen-dependent manner and hence may participate in the adhesion, formation of invadopodia and matrix degradation processes, promoting cell invasion. Alpha-3/beta-1 may mediate with LGALS3 the stimulation by CSPG4 of endothelial cells migration. The chain is Integrin alpha-3 (Itga3) from Mus musculus (Mouse).